Consider the following 211-residue polypeptide: Probable nicotinate-nucleotide adenylyltransferase (211 aa).

This sequence belongs to the NadD family.

The catalysed reaction is nicotinate beta-D-ribonucleotide + ATP + H(+) = deamido-NAD(+) + diphosphate. The protein operates within cofactor biosynthesis; NAD(+) biosynthesis; deamido-NAD(+) from nicotinate D-ribonucleotide: step 1/1. Functionally, catalyzes the reversible adenylation of nicotinate mononucleotide (NaMN) to nicotinic acid adenine dinucleotide (NaAD). The polypeptide is Probable nicotinate-nucleotide adenylyltransferase (Thermoanaerobacter sp. (strain X514)).